Here is a 239-residue protein sequence, read N- to C-terminus: Ribose-5-phosphate isomerase A (239 aa).

Substrate contacts are provided by residues 34-37, 94-97, and 107-110; these read TGST, DGAD, and KGGG. The active-site Proton acceptor is Glu-116. A substrate-binding site is contributed by Lys-134.

It belongs to the ribose 5-phosphate isomerase family. In terms of assembly, homodimer.

The catalysed reaction is aldehydo-D-ribose 5-phosphate = D-ribulose 5-phosphate. It participates in carbohydrate degradation; pentose phosphate pathway; D-ribose 5-phosphate from D-ribulose 5-phosphate (non-oxidative stage): step 1/1. In terms of biological role, catalyzes the reversible conversion of ribose-5-phosphate to ribulose 5-phosphate. This Treponema denticola (strain ATCC 35405 / DSM 14222 / CIP 103919 / JCM 8153 / KCTC 15104) protein is Ribose-5-phosphate isomerase A.